A 262-amino-acid polypeptide reads, in one-letter code: Zinc import ATP-binding protein ZnuC (262 aa).

The 217-residue stretch at 4 to 220 folds into the ABC transporter domain; the sequence is LNLSGVRLSH…PEYLALFGPR (217 aa). 36–43 contributes to the ATP binding site; sequence GPNGAGKS. A disordered region spans residues 238-262; it reads ADGSVLPLAEGGGEPHTHGPGCRHG.

The protein belongs to the ABC transporter superfamily. Zinc importer (TC 3.A.1.15.5) family. As to quaternary structure, the complex is composed of two ATP-binding proteins (ZnuC), two transmembrane proteins (ZnuB) and a solute-binding protein (ZnuA).

The protein resides in the cell inner membrane. The catalysed reaction is Zn(2+)(out) + ATP(in) + H2O(in) = Zn(2+)(in) + ADP(in) + phosphate(in) + H(+)(in). In terms of biological role, part of the ABC transporter complex ZnuABC involved in zinc import. Responsible for energy coupling to the transport system. This chain is Zinc import ATP-binding protein ZnuC, found in Paramagnetospirillum magneticum (strain ATCC 700264 / AMB-1) (Magnetospirillum magneticum).